The following is a 219-amino-acid chain: 7-cyano-7-deazaguanine synthase (219 aa).

10–20 (FSGGQDSTTCL) is a binding site for ATP. Zn(2+) contacts are provided by C186, C195, C198, and C201.

The protein belongs to the QueC family. As to quaternary structure, homodimer. Zn(2+) is required as a cofactor.

The enzyme catalyses 7-carboxy-7-deazaguanine + NH4(+) + ATP = 7-cyano-7-deazaguanine + ADP + phosphate + H2O + H(+). The protein operates within purine metabolism; 7-cyano-7-deazaguanine biosynthesis. Functionally, catalyzes the ATP-dependent conversion of 7-carboxy-7-deazaguanine (CDG) to 7-cyano-7-deazaguanine (preQ(0)). The polypeptide is 7-cyano-7-deazaguanine synthase (Bacillus licheniformis (strain ATCC 14580 / DSM 13 / JCM 2505 / CCUG 7422 / NBRC 12200 / NCIMB 9375 / NCTC 10341 / NRRL NRS-1264 / Gibson 46)).